A 362-amino-acid polypeptide reads, in one-letter code: Peptide chain release factor 1 (362 aa).

Glutamine 240 is subject to N5-methylglutamine.

It belongs to the prokaryotic/mitochondrial release factor family. In terms of processing, methylated by PrmC. Methylation increases the termination efficiency of RF1.

The protein resides in the cytoplasm. Functionally, peptide chain release factor 1 directs the termination of translation in response to the peptide chain termination codons UAG and UAA. This Bifidobacterium longum (strain NCC 2705) protein is Peptide chain release factor 1.